We begin with the raw amino-acid sequence, 262 residues long: Type III pantothenate kinase (262 aa).

12–19 provides a ligand contact to ATP; that stretch reads DIGNTSIA. Residues Y94 and 109 to 112 contribute to the substrate site; that span reads GSDV. The Proton acceptor role is filled by D111. Residue D132 participates in K(+) binding. T135 contacts ATP. T187 contacts substrate.

Belongs to the type III pantothenate kinase family. In terms of assembly, homodimer. The cofactor is NH4(+). K(+) serves as cofactor.

The protein resides in the cytoplasm. The enzyme catalyses (R)-pantothenate + ATP = (R)-4'-phosphopantothenate + ADP + H(+). It participates in cofactor biosynthesis; coenzyme A biosynthesis; CoA from (R)-pantothenate: step 1/5. In terms of biological role, catalyzes the phosphorylation of pantothenate (Pan), the first step in CoA biosynthesis. The polypeptide is Type III pantothenate kinase (Borrelia garinii subsp. bavariensis (strain ATCC BAA-2496 / DSM 23469 / PBi) (Borreliella bavariensis)).